We begin with the raw amino-acid sequence, 277 residues long: Pantothenate synthetase (277 aa).

26 to 33 (MGNLHEGH) provides a ligand contact to ATP. Residue His-33 is the Proton donor of the active site. Gln-57 is a binding site for (R)-pantoate. Residue Gln-57 participates in beta-alanine binding. 144–147 (GKKD) is an ATP binding site. Gln-150 serves as a coordination point for (R)-pantoate. Residues Gly-173 and 181 to 184 (LSSR) each bind ATP.

Belongs to the pantothenate synthetase family. Homodimer.

The protein resides in the cytoplasm. The enzyme catalyses (R)-pantoate + beta-alanine + ATP = (R)-pantothenate + AMP + diphosphate + H(+). It functions in the pathway cofactor biosynthesis; (R)-pantothenate biosynthesis; (R)-pantothenate from (R)-pantoate and beta-alanine: step 1/1. Its function is as follows. Catalyzes the condensation of pantoate with beta-alanine in an ATP-dependent reaction via a pantoyl-adenylate intermediate. The protein is Pantothenate synthetase of Chromobacterium violaceum (strain ATCC 12472 / DSM 30191 / JCM 1249 / CCUG 213 / NBRC 12614 / NCIMB 9131 / NCTC 9757 / MK).